A 377-amino-acid polypeptide reads, in one-letter code: Guanine nucleotide-binding protein subunit alpha-13 (377 aa).

S-palmitoyl cysteine attachment occurs at residues Cys14 and Cys18. A G-alpha domain is found at 47–377 (RLVKILLLGA…HDNLKQLMLQ (331 aa)). Positions 50 to 63 (KILLLGAGESGKST) are G1 motif. GTP contacts are provided by residues 58–63 (ESGKST), Ser173, and 197–200 (LLAR). Ser62 is a Mg(2+) binding site. Residues 195–203 (DILLARRPT) are G2 motif. Residue Thr203 participates in Mg(2+) binding. Thr203 is subject to Phosphothreonine; by PKA. Residues 218–227 (FKMVDVGGQR) are G3 motif. Residues 287-294 (ILFLNKTD) are G4 motif. Residues 291 to 294 (NKTD) and Ala349 contribute to the GTP site. Positions 347 to 352 (TTAINT) are G5 motif.

It belongs to the G-alpha family. G(12) subfamily. As to quaternary structure, g proteins are composed of 3 units; alpha, beta and gamma. The alpha chain contains the guanine nucleotide binding site. Interacts with UBXD5. Interacts with HAX1. Interacts (in GTP-bound form) with PPP5C (via TPR repeats); activates PPP5C phosphatase activity and translocates PPP5C to the cell membrane. Interacts with RGS22. Interacts with ARHGEF1. Interacts (in GTP-bound form) with ARHGEF11 (via RGS domain). Interacts (in GTP-bound form) with ARHGEF12 (via RGS domain). Interacts (in GTP-bound form) with CTNND1. Interacts with GAS2L2. Interacts with GPR35. Interacts with GPR174. Post-translationally, palmitoylation is critical for proper membrane localization and signaling. In terms of processing, phosphorylation on Thr-203 by PKA destabilizes the heterotrimer of alpha, beta and gamma, and inhibits Rho activation.

It localises to the membrane. It is found in the melanosome. The protein localises to the cytoplasm. Its subcellular location is the nucleus. Its function is as follows. Guanine nucleotide-binding proteins (G proteins) are involved as modulators or transducers in various transmembrane signaling systems. Activates effector molecule RhoA by binding and activating RhoGEFs (ARHGEF1/p115RhoGEF, ARHGEF11/PDZ-RhoGEF and ARHGEF12/LARG). GNA13-dependent Rho signaling subsequently regulates transcription factor AP-1 (activating protein-1). Promotes tumor cell invasion and metastasis by activating RhoA/ROCK signaling pathway. Inhibits CDH1-mediated cell adhesion in process independent from Rho activation. In lymphoid follicles, transmits P2RY8- and S1PR2-dependent signals that lead to inhibition of germinal center (GC) B cell growth and migration outside the GC niche. The polypeptide is Guanine nucleotide-binding protein subunit alpha-13 (Gna13) (Rattus norvegicus (Rat)).